The following is a 131-amino-acid chain: ATP synthase epsilon chain, chloroplastic (131 aa).

The protein belongs to the ATPase epsilon chain family. As to quaternary structure, F-type ATPases have 2 components, CF(1) - the catalytic core - and CF(0) - the membrane proton channel. CF(1) has five subunits: alpha(3), beta(3), gamma(1), delta(1), epsilon(1). CF(0) has three main subunits: a, b and c.

It localises to the plastid. It is found in the chloroplast thylakoid membrane. Its function is as follows. Produces ATP from ADP in the presence of a proton gradient across the membrane. This is ATP synthase epsilon chain, chloroplastic from Guillardia theta (Cryptophyte).